A 592-amino-acid polypeptide reads, in one-letter code: Arginine--tRNA ligase (592 aa).

The short motif at 112–122 (VNPNKELHVGH) is the 'HIGH' region element.

It belongs to the class-I aminoacyl-tRNA synthetase family. As to quaternary structure, monomer.

The protein resides in the cytoplasm. It catalyses the reaction tRNA(Arg) + L-arginine + ATP = L-arginyl-tRNA(Arg) + AMP + diphosphate. The chain is Arginine--tRNA ligase from Thermus thermophilus (strain ATCC 27634 / DSM 579 / HB8).